The chain runs to 929 residues: Band 3 anion transport protein (929 aa).

The residue at position 1 (methionine 1) is an N-acetylmethionine. Over 1–422 (MGDMRDHEEV…LSDITDALSP (422 aa)) the chain is Cytoplasmic. Serine 18 is subject to Phosphoserine. Phosphotyrosine is present on residues tyrosine 31 and tyrosine 56. Residues 46–67 (ALPTEQTATDYVPSSTSTPHPS) are disordered. Over residues 58–67 (PSSTSTPHPS) the composition is skewed to low complexity. The interval 69–303 (GQVYVELQEL…LGRAAATLMT (235 aa)) is globular. The interaction with ANK1 stretch occupies residues 190 to 199 (AVLTRSGGAS). 3 positions are modified to phosphoserine: serine 199, serine 222, and serine 363. The dimerization arm stretch occupies residues 317–370 (REELLRSLESFLDCSLVLPPTDAPSEKALLNLVPVQKELLRRRYLPSPAKPDPN). Positions 366-389 (KPDPNLYNTLDLNGGKGGPGDEDD) are disordered. Tyrosine 372 is subject to Phosphotyrosine. A Phosphothreonine modification is found at threonine 374. The chain crosses the membrane as a helical span at residues 423–446 (QVLAAVIFIYFAALSPAVTFGGLL). Topologically, residues 447 to 454 (GEKTRNLM) are extracellular. The helical transmembrane segment at 455–475 (GVSELLISTAVQGILFALLGA) threads the bilayer. Over 476–478 (QPL) the chain is Cytoplasmic. Residues 479–495 (LVLGFSGPLLVFEEAFF) form a discontinuously helical membrane-spanning segment. The Extracellular segment spans residues 496–504 (SFCESNNLE). The helical transmembrane segment at 505–525 (YIVGRAWIGFWLILLVMLVVA) threads the bilayer. The Cytoplasmic segment spans residues 526–537 (FEGSFLVQYISR). A helical membrane pass occupies residues 538–560 (YTQEIFSFLISLIFIYETFSKLI). Residues 561-588 (KIFQDYPLQQTYAPVVMKPKPQGPVPNT) are Extracellular-facing. A helical membrane pass occupies residues 589 to 609 (ALFSLVLMAGTFLLAMTLRKF). Residues 610–620 (KNSTYFPGKLR) are Cytoplasmic-facing. Residues 621-641 (RVIGDFGVPISILIMVLVDSF) form a helical membrane-spanning segment. The Extracellular segment spans residues 642–681 (IKGTYTQKLSVPDGLKVSNSSARGWVIHPLGLYRLFPTWM). The N-linked (GlcNAc...) asparagine glycan is linked to asparagine 660. A helical transmembrane segment spans residues 682–702 (MFASVLPALLVFILIFLESQI). The Cytoplasmic portion of the chain corresponds to 703-718 (TTLIVSKPERKMIKGS). The helical transmembrane segment at 719 to 737 (GFHLDLLLVVGMGGVAALF) threads the bilayer. The chain crosses the membrane as a discontinuously helical span at residues 738-755 (GMPWLSATTVRSVTHANA). The Cytoplasmic segment spans residues 756–778 (LTVMGKASGPGAAAQIQEVKEQR). A run of 2 helical transmembrane segments spans residues 779–799 (ISGL…PILS) and 800–818 (RIPL…VTSL). Residues 819–856 (SGIQLFDRILLLFKPPKYHPDVPFVKRVKTWRMHLFTG) lie on the Cytoplasmic side of the membrane. The discontinuously helical intramembrane region spans 857-887 (IQIICLAVLWVVKSTPASLALPFVLILTVPL). Residue cysteine 861 is the site of S-palmitoyl cysteine attachment. The Cytoplasmic portion of the chain corresponds to 888–929 (RRLILPLIFRELELQCLDGDDAKVTFDEENGLDEYDEVPMPV). Tyrosine 922 is subject to Phosphotyrosine.

This sequence belongs to the anion exchanger (TC 2.A.31) family. In terms of assembly, a dimer in solution, but in its membrane environment, it exists primarily as a mixture of dimers and tetramers and spans the membrane asymmetrically. Component of the ankyrin-1 complex in the erythrocyte, composed of ANK1, RHCE, RHAG, SLC4A1, EPB42, GYPA, GYPB and AQP1. Interacts with STOM; this interaction positively regulates SLC4A1 activity. Interacts with GYPA; a GYPA monomer is bound at each end of the SLC4A1 dimer forming a heterotetramer. Three SLC4A1 dimers (Band 3-I, Band 3-II and Band 3-III) participates in the ankyrin-1 complex. Interacts (via the cytoplasmic domain) with EPB42; this interaction is mediated by the SLC4A1 Band 3-I dimer. Interacts (via the cytoplasmic domain) directly with ANK1; this interaction is mediated by the SLC4A1 Band 3-II and Band 3-III dimers. Interacts with TMEM139. Detected in erythrocytes (at protein level).

The protein localises to the cell membrane. The protein resides in the basolateral cell membrane. The catalysed reaction is hydrogencarbonate(in) + chloride(out) = hydrogencarbonate(out) + chloride(in). Functions both as a transporter that mediates electroneutral anion exchange across the cell membrane and as a structural protein. Component of the ankyrin-1 complex of the erythrocyte membrane; required for normal flexibility and stability of the erythrocyte membrane and for normal erythrocyte shape via the interactions of its cytoplasmic domain with cytoskeletal proteins, glycolytic enzymes, and hemoglobin. Functions as a transporter that mediates the 1:1 exchange of inorganic anions across the erythrocyte membrane. Mediates chloride-bicarbonate exchange in the kidney, and is required for normal acidification of the urine. The protein is Band 3 anion transport protein of Mus musculus (Mouse).